A 1464-amino-acid polypeptide reads, in one-letter code: MGRVGYWTLLVLPALLVWRGPAPSAAAEKGPPALNIAVMLGHSHDVTERELRTLWGPEQAAGLPLDVNVVALLMNRTDPKSLITHVCDLMSGARIHGLVFGDDTDQEAVAQMLDFISSHTFVPILGIHGGASMIMADKDPTSTFFQFGASIQQQATVMLKIMQDYDWHVFSLVTTIFPGYREFISFVKTTVDNSFVGWDMQNVITLDTSFEDAKTQVQLKKIHSSVILLYCSKDEAVLILSEARSLGLTGYDFFWIVPSLVSGNTELIPKEFPSGLISVSYDDWDYSLEARVRDGIGILTTAASSMLEKFSYIPEAKASCYGQMERPEVPMHTLHPFMVNVTWDGKDLSFTEEGYQVHPRLVVIVLNKDREWEKVGKWENHTLSLRHAVWPRYKSFSDCEPDDNHLSIVTLEEAPFVIVEDIDPLTETCVRNTVPCRKFVKINNSTNEGMNVKKCCKGFCIDILKKLSRTVKFTYDLYLVTNGKHGKKVNNVWNGMIGEVVYQRAVMAVGSLTINEERSEVVDFSVPFVETGISVMVSRSNGTVSPSAFLEPFSASVWVMMFVMLLIVSAIAVFVFEYFSPVGYNRNLAKGKAPHGPSFTIGKAIWLLWGLVFNNSVPVQNPKGTTSKIMVSVWAFFAVIFLASYTANLAAFMIQEEFVDQVTGLSDKKFQRPHDYSPPFRFGTVPNGSTERNIRNNYPYMHQYMTKFNQKGVEDALVSLKTGKLDAFIYDAAVLNYKAGRDEGCKLVTIGSGYIFATTGYGIALQKGSPWKRQIDLALLQFVGDGEMEELETLWLTGICHNEKNEVMSSQLDIDNMAGVFYMLAAAMALSLITFIWEHLFYWKLRFCFTGVCSDRPGLLFSISRGIYSCIHGVHIEEKKKSPDFNLTGSQSNMLKLLRSAKNISSMSNMNSSRMDSPKRAADFIQRGSLIMDMVSDKGNLMYSDNRSFQGKESIFGDNMNELQTFVANRQKDNLNNYVFQGQHPLTLNESNPNTVEVAVSTESKANSRPRQLWKKSVDSIRQDSLSQNPVSQRDEATAENRTHSLKSPRYLPEEMAHSDISETSNRATCHREPDNSKNHKTKDNFKRSVASKYPKDCSEVERTYLKTKSSSPRDKIYTIDGEKEPGFHLDPPQFVENVTLPENVDFPDPYQDPSENFRKGDSTLPMNRNPLHNEEGLSNNDQYKLYSKHFTLKDKGSPHSETSERYRQNSTHCRSCLSNMPTYSGHFTMRSPFKCDACLRMGNLYDIDEDQMLQETGNPATGEQVYQQDWAQNNALQLQKNKLRISRQHSYDNIVDKPRELDLSRPSRSISLKDRERLLEGNFYGSLFSVPSSKLSGKKSSLFPQGLEDSKRSKSLLPDHTSDNPFLHSHRDDQRLVIGRCPSDPYKHSLPSQAVNDSYLRSSLRSTASYCSRDSRGHNDVYISEHVMPYAANKNNMYSTPRVLNSCSNRRVYKKMPSIESDV.

The signal sequence occupies residues 1–22 (MGRVGYWTLLVLPALLVWRGPA). The Extracellular portion of the chain corresponds to 23-556 (PSAAAEKGPP…SAFLEPFSAS (534 aa)). Residue histidine 44 participates in Zn(2+) binding. Residue asparagine 75 is glycosylated (N-linked (GlcNAc...) asparagine). The cysteines at positions 87 and 320 are disulfide-linked. Zn(2+) is bound by residues histidine 128, glutamate 266, and aspartate 282. N-linked (GlcNAc...) asparagine glycosylation is found at asparagine 340, asparagine 380, asparagine 443, and asparagine 444. Intrachain disulfides connect cysteine 429/cysteine 455 and cysteine 436/cysteine 456. 3 residues coordinate L-glutamate: serine 511, threonine 513, and arginine 518. An N-linked (GlcNAc...) asparagine glycan is attached at asparagine 541. Residues 557 to 576 (VWVMMFVMLLIVSAIAVFVF) form a helical membrane-spanning segment. Residues 577-600 (EYFSPVGYNRNLAKGKAPHGPSFT) lie on the Cytoplasmic side of the membrane. The pore-forming stretch occupies residues 599 to 620 (FTIGKAIWLLWGLVFNNSVPVQ). The discontinuously helical intramembrane region spans 601-615 (IGKAIWLLWGLVFNN). Residues 616 to 625 (SVPVQNPKGT) are Cytoplasmic-facing. Residues 626–646 (TSKIMVSVWAFFAVIFLASYT) form a helical membrane-spanning segment. The Extracellular portion of the chain corresponds to 647–814 (ANLAAFMIQE…NEVMSSQLDI (168 aa)). A glycan (N-linked (GlcNAc...) asparagine) is linked at asparagine 687. Positions 689, 690, and 731 each coordinate L-glutamate. A disulfide bridge connects residues cysteine 745 and cysteine 800. Residues 815–835 (DNMAGVFYMLAAAMALSLITF) form a helical membrane-spanning segment. Residues 836–1464 (IWEHLFYWKL…KKMPSIESDV (629 aa)) lie on the Cytoplasmic side of the membrane. A phosphoserine mark is found at serine 882, serine 890, and serine 929. Composition is skewed to polar residues over residues 997–1010 (EVAV…NSRP) and 1023–1032 (QDSLSQNPVS). Positions 997–1083 (EVAVSTESKA…PDNSKNHKTK (87 aa)) are disordered. Serine 1025 is subject to Phosphoserine. Basic and acidic residues-rich tracts occupy residues 1033–1043 (QRDEATAENRT) and 1052–1061 (LPEEMAHSDI). A phosphoserine mark is found at serine 1059 and serine 1062. Positions 1070-1083 (CHREPDNSKNHKTK) are enriched in basic and acidic residues. 2 positions are modified to phosphoserine: serine 1198 and serine 1291. Residues 1335–1372 (KLSGKKSSLFPQGLEDSKRSKSLLPDHTSDNPFLHSHR) form a disordered region. The short motif at 1462-1464 (SDV) is the PDZ-binding element.

It belongs to the glutamate-gated ion channel (TC 1.A.10.1) family. NR2A/GRIN2A subfamily. In terms of assembly, heterotetramer. Forms heterotetrameric channels composed of two GluN1/zeta subunits (GRIN1), and two identical GluN2/epsilon subunits (GRIN2A, GRIN2B, GRIN2C or GRIN2D) or GluN3 subunits (GRIN3A or GRIN3B) (in vitro). Can also form heterotetrameric channels that contain at least two GluN1 subunits and at least two different GluN2 subunits (or a combination of one GluN2 and one GluN3 subunits) (in vitro). In vivo, the subunit composition may depend on the expression levels of the different subunits. Found in a complex with GRIN1, GRIN3A and PPP2CB. Found in a complex with GRIN1 and GRIN3B. Interacts with AIP1. Interacts with HIP1 and NETO1. Interacts with SNX27 (via PDZ domain); the interaction is required for recycling to the plasma membrane when endocytosed and prevent degradation in lysosomes. Interacts with PDZ domains of PATJ and DLG4. Interacts with LRFN2. Interacts with RPH3A and DLG4; this ternary complex regulates NMDA receptor composition at postsynaptic membranes. Interacts with SORCS2. Interacts with ARC; preventing ARC oligomerization. Interacts (via the extreme C-terminus) with FRMPD2 (the second PDZ domain); the interaction is direct and is likely to promote NMDAR-mediated neural signal transmission. GRIN2A binds FRMPD2 with lower affinity than GRIN2B.

It is found in the cell projection. It localises to the dendritic spine. The protein resides in the cell membrane. Its subcellular location is the synapse. The protein localises to the postsynaptic cell membrane. It is found in the cytoplasmic vesicle membrane. The catalysed reaction is Ca(2+)(in) = Ca(2+)(out). It catalyses the reaction Na(+)(in) = Na(+)(out). The enzyme catalyses K(+)(in) = K(+)(out). NMDA glutamate receptor activity is inhibited by endogenous Mg(2+) in a voltage-dependent manner. NMDA glutamate receptor activity is inhibited by endogenous Zn(2+). NMDA glutamate receptor activity is inhibited by endogenous protons. Component of N-methyl-D-aspartate (NMDA) receptors (NMDARs) that function as heterotetrameric, ligand-gated cation channels with high calcium permeability and voltage-dependent block by Mg(2+). NMDARs participate in synaptic plasticity for learning and memory formation by contributing to the slow phase of excitatory postsynaptic current, long-term synaptic potentiation, and learning. Channel activation requires binding of the neurotransmitter L-glutamate to the GluN2 subunit, glycine or D-serine binding to the GluN1 subunit, plus membrane depolarization to eliminate channel inhibition by Mg(2+). NMDARs mediate simultaneously the potasium efflux and the influx of calcium and sodium. Each GluN2 subunit confers differential attributes to channel properties, including activation, deactivation and desensitization kinetics, pH sensitivity, Ca2(+) permeability, and binding to allosteric modulators. Participates in the synaptic plasticity regulation through activation by the L-glutamate releaseed by BEST1, into the synaptic cleft, upon F2R/PAR-1 activation in astrocyte. The protein is Glutamate receptor ionotropic, NMDA 2A of Homo sapiens (Human).